Reading from the N-terminus, the 305-residue chain is Glutaminase (305 aa).

Positions 61, 113, 158, 165, 189, 241, and 259 each coordinate substrate.

Belongs to the glutaminase family. In terms of assembly, homotetramer.

The catalysed reaction is L-glutamine + H2O = L-glutamate + NH4(+). The protein is Glutaminase of Clostridium botulinum (strain Kyoto / Type A2).